The primary structure comprises 396 residues: MAKKHVSDLDLKGKVVLERADFNVPLKDGKITNDNRIVQALPTIEYILDQGGRLVLFSHLGKVKEESDKEKLTLRPVAERLSEKLGKDVNFIPHTRGEVLEKAIAELKDGEVLLVENTRFEDLDGKKESKNDPELGKYWASLGDVFVNDAFGTAHRSHASNVGIASNLESAAGDLMEKEIKFIGGVVNNPDKPVVAILGGAKVSDKIGVIENLLNVADKVLIGGGMAYTFLKAQGYEIGKSLLEADKVDFAKDLLERAGDKIVLPVDAKVAREFSNEAQFTVVTIDQIPADQEALDIGPKTVELFEKELKGAHTVVWNGPMGVFEFENFAQGTVGVCEAIAEMKDATTIIGGGDSAAAAMMLGFEDDFSHISTGGGASLEYLEGKELPGIQSISDK.

Substrate contacts are provided by residues 21–23 (DFN), R36, 59–62 (HLGK), R119, and R156. Residues K206, E325, and 352–355 (GGDS) contribute to the ATP site.

Belongs to the phosphoglycerate kinase family. In terms of assembly, monomer.

The protein resides in the cytoplasm. The catalysed reaction is (2R)-3-phosphoglycerate + ATP = (2R)-3-phospho-glyceroyl phosphate + ADP. It functions in the pathway carbohydrate degradation; glycolysis; pyruvate from D-glyceraldehyde 3-phosphate: step 2/5. The protein is Phosphoglycerate kinase of Staphylococcus carnosus (strain TM300).